Here is a 166-residue protein sequence, read N- to C-terminus: Large ribosomal subunit protein uL10 (166 aa).

Belongs to the universal ribosomal protein uL10 family. In terms of assembly, part of the ribosomal stalk of the 50S ribosomal subunit. The N-terminus interacts with L11 and the large rRNA to form the base of the stalk. The C-terminus forms an elongated spine to which L12 dimers bind in a sequential fashion forming a multimeric L10(L12)X complex.

In terms of biological role, forms part of the ribosomal stalk, playing a central role in the interaction of the ribosome with GTP-bound translation factors. This Staphylococcus haemolyticus (strain JCSC1435) protein is Large ribosomal subunit protein uL10.